The chain runs to 185 residues: ATP synthase subunit delta (185 aa).

This sequence belongs to the ATPase delta chain family. F-type ATPases have 2 components, F(1) - the catalytic core - and F(0) - the membrane proton channel. F(1) has five subunits: alpha(3), beta(3), gamma(1), delta(1), epsilon(1). F(0) has three main subunits: a(1), b(2) and c(10-14). The alpha and beta chains form an alternating ring which encloses part of the gamma chain. F(1) is attached to F(0) by a central stalk formed by the gamma and epsilon chains, while a peripheral stalk is formed by the delta and b chains.

It is found in the cell inner membrane. In terms of biological role, f(1)F(0) ATP synthase produces ATP from ADP in the presence of a proton or sodium gradient. F-type ATPases consist of two structural domains, F(1) containing the extramembraneous catalytic core and F(0) containing the membrane proton channel, linked together by a central stalk and a peripheral stalk. During catalysis, ATP synthesis in the catalytic domain of F(1) is coupled via a rotary mechanism of the central stalk subunits to proton translocation. This protein is part of the stalk that links CF(0) to CF(1). It either transmits conformational changes from CF(0) to CF(1) or is implicated in proton conduction. This is ATP synthase subunit delta from Coxiella burnetii (strain CbuK_Q154) (Coxiella burnetii (strain Q154)).